The chain runs to 198 residues: Na(+)-translocating NADH-quinone reductase subunit E (198 aa).

6 helical membrane-spanning segments follow: residues 11 to 31, 39 to 59, 77 to 97, 110 to 130, 140 to 160, and 176 to 196; these read SIFI…FLAV, FGLG…NNLV, FLNF…LEMI, GIFL…SFMV, VVYG…LAGI, and LGIT…FSGV.

Belongs to the NqrDE/RnfAE family. In terms of assembly, composed of six subunits; NqrA, NqrB, NqrC, NqrD, NqrE and NqrF.

Its subcellular location is the cell inner membrane. It carries out the reaction a ubiquinone + n Na(+)(in) + NADH + H(+) = a ubiquinol + n Na(+)(out) + NAD(+). NQR complex catalyzes the reduction of ubiquinone-1 to ubiquinol by two successive reactions, coupled with the transport of Na(+) ions from the cytoplasm to the periplasm. NqrA to NqrE are probably involved in the second step, the conversion of ubisemiquinone to ubiquinol. This Vibrio anguillarum (Listonella anguillarum) protein is Na(+)-translocating NADH-quinone reductase subunit E.